The following is a 134-amino-acid chain: MTNLRKTHPLMKIINSSFIDLPAPSNISSWWNFGSLLGVCLIIQILTGLFLAMHYTSDTMTAFSSVTHICRDVNYGWLIRYLHANGASMFFICLFLHVGRGLYYGSYMYLETWNIGVLLLFAVMATAFMGYVLP.

Helical transmembrane passes span 33 to 53 (FGSL…FLAM), 77 to 98 (WLIR…FLHV), and 113 to 133 (WNIG…GYVL). Heme b-binding residues include histidine 83 and histidine 97.

The protein belongs to the cytochrome b family. The cytochrome bc1 complex contains 11 subunits: 3 respiratory subunits (MT-CYB, CYC1 and UQCRFS1), 2 core proteins (UQCRC1 and UQCRC2) and 6 low-molecular weight proteins (UQCRH/QCR6, UQCRB/QCR7, UQCRQ/QCR8, UQCR10/QCR9, UQCR11/QCR10 and a cleavage product of UQCRFS1). This cytochrome bc1 complex then forms a dimer. It depends on heme b as a cofactor.

The protein resides in the mitochondrion inner membrane. Component of the ubiquinol-cytochrome c reductase complex (complex III or cytochrome b-c1 complex) that is part of the mitochondrial respiratory chain. The b-c1 complex mediates electron transfer from ubiquinol to cytochrome c. Contributes to the generation of a proton gradient across the mitochondrial membrane that is then used for ATP synthesis. This is Cytochrome b (MT-CYB) from Sorex shinto sadonis (Sado shrew).